We begin with the raw amino-acid sequence, 460 residues long: A-type ATP synthase subunit B (460 aa).

Belongs to the ATPase alpha/beta chains family. Has multiple subunits with at least A(3), B(3), C, D, E, F, H, I and proteolipid K(x).

The protein resides in the cell membrane. In terms of biological role, component of the A-type ATP synthase that produces ATP from ADP in the presence of a proton gradient across the membrane. The B chain is a regulatory subunit. The chain is A-type ATP synthase subunit B from Thermoplasma volcanium (strain ATCC 51530 / DSM 4299 / JCM 9571 / NBRC 15438 / GSS1).